We begin with the raw amino-acid sequence, 605 residues long: UvrABC system protein C (605 aa).

Residues 13 to 92 (SEPGVYLMKD…IKRYRPKYNV (80 aa)) enclose the GIY-YIG domain. The 36-residue stretch at 205–240 (EKLMELLKEKMNESSMNFRFEEAAVYRDKIKSLEEM) folds into the UVR domain.

Belongs to the UvrC family. In terms of assembly, interacts with UvrB in an incision complex.

It is found in the cytoplasm. In terms of biological role, the UvrABC repair system catalyzes the recognition and processing of DNA lesions. UvrC both incises the 5' and 3' sides of the lesion. The N-terminal half is responsible for the 3' incision and the C-terminal half is responsible for the 5' incision. This Clostridioides difficile (strain 630) (Peptoclostridium difficile) protein is UvrABC system protein C.